The following is a 130-amino-acid chain: Large ribosomal subunit protein bL19 (130 aa).

The protein belongs to the bacterial ribosomal protein bL19 family.

Functionally, this protein is located at the 30S-50S ribosomal subunit interface and may play a role in the structure and function of the aminoacyl-tRNA binding site. This chain is Large ribosomal subunit protein bL19, found in Cupriavidus taiwanensis (strain DSM 17343 / BCRC 17206 / CCUG 44338 / CIP 107171 / LMG 19424 / R1) (Ralstonia taiwanensis (strain LMG 19424)).